A 20-amino-acid polypeptide reads, in one-letter code: Cytochrome c oxidase subunit 6A1, mitochondrial (20 aa).

The protein belongs to the cytochrome c oxidase subunit 6A family. Component of the cytochrome c oxidase (complex IV, CIV), a multisubunit enzyme composed of 14 subunits. The complex is composed of a catalytic core of 3 subunits MT-CO1, MT-CO2 and MT-CO3, encoded in the mitochondrial DNA, and 11 supernumerary subunits COX4I, COX5A, COX5B, COX6A, COX6B, COX6C, COX7A, COX7B, COX7C, COX8 and NDUFA4, which are encoded in the nuclear genome. The complex exists as a monomer or a dimer and forms supercomplexes (SCs) in the inner mitochondrial membrane with NADH-ubiquinone oxidoreductase (complex I, CI) and ubiquinol-cytochrome c oxidoreductase (cytochrome b-c1 complex, complex III, CIII), resulting in different assemblies (supercomplex SCI(1)III(2)IV(1) and megacomplex MCI(2)III(2)IV(2)). In terms of tissue distribution, liver specific isoform.

The protein resides in the mitochondrion inner membrane. The protein operates within energy metabolism; oxidative phosphorylation. In terms of biological role, component of the cytochrome c oxidase, the last enzyme in the mitochondrial electron transport chain which drives oxidative phosphorylation. The respiratory chain contains 3 multisubunit complexes succinate dehydrogenase (complex II, CII), ubiquinol-cytochrome c oxidoreductase (cytochrome b-c1 complex, complex III, CIII) and cytochrome c oxidase (complex IV, CIV), that cooperate to transfer electrons derived from NADH and succinate to molecular oxygen, creating an electrochemical gradient over the inner membrane that drives transmembrane transport and the ATP synthase. Cytochrome c oxidase is the component of the respiratory chain that catalyzes the reduction of oxygen to water. Electrons originating from reduced cytochrome c in the intermembrane space (IMS) are transferred via the dinuclear copper A center (CU(A)) of subunit 2 and heme A of subunit 1 to the active site in subunit 1, a binuclear center (BNC) formed by heme A3 and copper B (CU(B)). The BNC reduces molecular oxygen to 2 water molecules unsing 4 electrons from cytochrome c in the IMS and 4 protons from the mitochondrial matrix. The chain is Cytochrome c oxidase subunit 6A1, mitochondrial (COX6A1) from Canis lupus familiaris (Dog).